Consider the following 304-residue polypeptide: Bifunctional protein FolD (304 aa).

NADP(+)-binding positions include 176-178, Ile201, and Ile242; that span reads GAS.

The protein belongs to the tetrahydrofolate dehydrogenase/cyclohydrolase family. As to quaternary structure, homodimer.

It carries out the reaction (6R)-5,10-methylene-5,6,7,8-tetrahydrofolate + NADP(+) = (6R)-5,10-methenyltetrahydrofolate + NADPH. The catalysed reaction is (6R)-5,10-methenyltetrahydrofolate + H2O = (6R)-10-formyltetrahydrofolate + H(+). The protein operates within one-carbon metabolism; tetrahydrofolate interconversion. Catalyzes the oxidation of 5,10-methylenetetrahydrofolate to 5,10-methenyltetrahydrofolate and then the hydrolysis of 5,10-methenyltetrahydrofolate to 10-formyltetrahydrofolate. The polypeptide is Bifunctional protein FolD (Gluconobacter oxydans (strain 621H) (Gluconobacter suboxydans)).